Consider the following 387-residue polypeptide: Protein-glutamate methylesterase/protein-glutamine glutaminase 1 (387 aa).

The Response regulatory domain maps to 18-136 (RVMVVDDSAV…EISGGTDFRH (119 aa)). Residue aspartate 69 is modified to 4-aspartylphosphate. The CheB-type methylesterase domain maps to 190–387 (PAAEERPDII…AYVLRSANKR (198 aa)). Catalysis depends on residues serine 204, histidine 233, and aspartate 329.

The protein belongs to the CheB family. In terms of processing, phosphorylated by CheA. Phosphorylation of the N-terminal regulatory domain activates the methylesterase activity.

It localises to the cytoplasm. The catalysed reaction is [protein]-L-glutamate 5-O-methyl ester + H2O = L-glutamyl-[protein] + methanol + H(+). It carries out the reaction L-glutaminyl-[protein] + H2O = L-glutamyl-[protein] + NH4(+). Functionally, involved in chemotaxis. Part of a chemotaxis signal transduction system that modulates chemotaxis in response to various stimuli. Catalyzes the demethylation of specific methylglutamate residues introduced into the chemoreceptors (methyl-accepting chemotaxis proteins or MCP) by CheR. Also mediates the irreversible deamidation of specific glutamine residues to glutamic acid. This Rhodospirillum rubrum (strain ATCC 11170 / ATH 1.1.1 / DSM 467 / LMG 4362 / NCIMB 8255 / S1) protein is Protein-glutamate methylesterase/protein-glutamine glutaminase 1.